The sequence spans 1007 residues: Kinesin-like protein KIN-14F (1007 aa).

A Calponin-homology (CH) domain is found at 41 to 187 (AARRNEAAGW…CVLALKSYGD (147 aa)). The region spanning 390-715 (SIRVYCRVRP…LKFAERVSTV (326 aa)) is the Kinesin motor domain. An ATP-binding site is contributed by 472–479 (GQTGSGKT). A coiled-coil region spans residues 718 to 748 (GAARLNKESGEVKELKEQIARLKSSLAMKDS). Residues 885–904 (KQYLRNNSRKKDGNEFEQQR) show a composition bias toward basic and acidic residues. Disordered regions lie at residues 885–924 (KQYL…ATSD) and 944–1007 (SENG…AGTK). Positions 963–1001 (TRTPLHSQIPSASRKTSNGNRSGRQPLSGSDSRRLSSNG) are enriched in polar residues.

Belongs to the TRAFAC class myosin-kinesin ATPase superfamily. Kinesin family. KIN-14 subfamily.

The polypeptide is Kinesin-like protein KIN-14F (Oryza sativa subsp. japonica (Rice)).